The following is a 152-amino-acid chain: MVKAVTVLNSSEGVTGTVYFTQEGDGPTTVTGNLSGLKPGLHGFHVHALGDTTNGCMSTGPHFNPVGKEHGAPGDENRHAGDLGNITVGEDGTAAINIVDKQIPLTGPHSIIGRAVVVHSDPDDLGRGGHELSKSTGNAGGRVACGIIGLQG.

N-linked (GlcNAc...) asparagine glycans are attached at residues N9 and N33. Cu cation-binding residues include H45, H47, and H62. Cysteines 56 and 145 form a disulfide. H62, H70, H79, and D82 together coordinate Zn(2+). A glycan (N-linked (GlcNAc...) asparagine) is linked at N85. H119 is a Cu cation binding site.

It belongs to the Cu-Zn superoxide dismutase family. It depends on Cu cation as a cofactor. Requires Zn(2+) as cofactor. As to expression, expressed in fruits, leaves and pollen grains.

It localises to the cytoplasm. Its subcellular location is the endoplasmic reticulum. The catalysed reaction is 2 superoxide + 2 H(+) = H2O2 + O2. With respect to regulation, inhibited by KCN and H(2)O(2). Functionally, destroys radicals which are normally produced within the cells and which are toxic to biological systems. Probably involved in the protection against oxidative stress during pollen development. In Olea europaea (Common olive), this protein is Superoxide dismutase [Cu-Zn] 2 (OLE5).